Consider the following 265-residue polypeptide: Urease accessory protein UreH (265 aa).

Belongs to the UreD family. As to quaternary structure, ureH, UreF and UreG form a complex that acts as a GTP-hydrolysis-dependent molecular chaperone, activating the urease apoprotein by helping to assemble the nickel containing metallocenter of UreC. The UreE protein probably delivers the nickel.

It is found in the cytoplasm. Required for maturation of urease via the functional incorporation of the urease nickel metallocenter. This chain is Urease accessory protein UreH, found in Helicobacter pylori (strain P12).